The sequence spans 456 residues: Ribonuclease inhibitor (456 aa).

M1 carries the N-acetylmethionine modification. LRR repeat units follow at residues 15–43, 44–71, 72–100, 101–128, 129–157, 158–185, 186–214, 215–242, 243–271, 272–299, 300–328, 329–356, 357–385, 386–413, and 414–442; these read WTEL…CKDI, GSAL…VHLV, LQGL…CGVL, PSTL…LRLL, CEGL…CEPL, ASVL…ARVL, GQGL…CKDL, CGIV…IAEL, CPGL…CRDL, CRVL…ARLL, CESL…CQHV, SLML…IQEL, CQAL…CSSL, ASLL…VLQL, and LGSL…EDRL. S86 carries the post-translational modification Phosphoserine.

As to quaternary structure, forms high-affinity heterodimers with RNASE1, ANG and RNASE2.

It is found in the cytoplasm. The protein localises to the nucleus. Functionally, ribonuclease inhibitor which inhibits RNASE1, RNASE2 and angiogenin (ANG). May play a role in redox homeostasis. Required to inhibit the cytotoxic tRNA ribonuclease activity of ANG in the cytoplasm in absence of stress. Relocates to the nucleus in response to stress, relieving inhibition of ANG in the cytoplasm, and inhibiting the angiogenic activity of ANG in the nucleus. This is Ribonuclease inhibitor (RNH1) from Sus scrofa (Pig).